The following is a 285-amino-acid chain: Bifunctional protein FolD (285 aa).

Residues 165–167 (GRS) and Ser-190 each bind NADP(+).

Belongs to the tetrahydrofolate dehydrogenase/cyclohydrolase family. Homodimer.

It carries out the reaction (6R)-5,10-methylene-5,6,7,8-tetrahydrofolate + NADP(+) = (6R)-5,10-methenyltetrahydrofolate + NADPH. The enzyme catalyses (6R)-5,10-methenyltetrahydrofolate + H2O = (6R)-10-formyltetrahydrofolate + H(+). It participates in one-carbon metabolism; tetrahydrofolate interconversion. Functionally, catalyzes the oxidation of 5,10-methylenetetrahydrofolate to 5,10-methenyltetrahydrofolate and then the hydrolysis of 5,10-methenyltetrahydrofolate to 10-formyltetrahydrofolate. In Streptococcus pneumoniae (strain ATCC BAA-255 / R6), this protein is Bifunctional protein FolD.